A 227-amino-acid chain; its full sequence is MMLHIPGVLTKEQVAQCRDILDAADWADGNATSGAQSALAKRNRQLPEGSPAARAIGDAIQDALARNALFFSAALPLKVFPPLFNRYAGGDAFGTHVDNAIRLLRGTDFRVRSDLSATLFLEEPDAYDGGELCVEDTYGVHRAKLPAGDMVLYPASSLHHVTPVTRGERVASFFWIQSMVRDDADRTLLFQLDTQIQQLTAEKGGRDASVIALTGIYHNLLRRWADA.

Residues 78–178 enclose the Fe2OG dioxygenase domain; that stretch reads KVFPPLFNRY…RVASFFWIQS (101 aa). The Fe cation site is built by His96, Asp98, and His159. Arg169 serves as a coordination point for 2-oxoglutarate.

Fe(2+) serves as cofactor. The cofactor is L-ascorbate.

In Burkholderia thailandensis (strain ATCC 700388 / DSM 13276 / CCUG 48851 / CIP 106301 / E264), this protein is PKHD-type hydroxylase BTH_II1201.